The primary structure comprises 144 residues: MAETQTTKKGAKRVRQPVPARRSKPNRPAKAAPGPHASLSFLRVAPRKVRLVADEVRGMPVGDALAVLKYTPQAAAKHLSKLIRSAVANAEQKGGRVDVDVLVVKTLTVDQGPKMRRFMPRAMGRAFRIEKKTSHVYVELGTAQ.

Positions 1–38 (MAETQTTKKGAKRVRQPVPARRSKPNRPAKAAPGPHAS) are disordered. The span at 9–27 (KGAKRVRQPVPARRSKPNR) shows a compositional bias: basic residues.

This sequence belongs to the universal ribosomal protein uL22 family. Part of the 50S ribosomal subunit.

This protein binds specifically to 23S rRNA; its binding is stimulated by other ribosomal proteins, e.g. L4, L17, and L20. It is important during the early stages of 50S assembly. It makes multiple contacts with different domains of the 23S rRNA in the assembled 50S subunit and ribosome. In terms of biological role, the globular domain of the protein is located near the polypeptide exit tunnel on the outside of the subunit, while an extended beta-hairpin is found that lines the wall of the exit tunnel in the center of the 70S ribosome. This Anaeromyxobacter sp. (strain Fw109-5) protein is Large ribosomal subunit protein uL22.